Here is a 103-residue protein sequence, read N- to C-terminus: Non-histone chromosomal protein 6 (103 aa).

2 disordered regions span residues 1-30 (MPKAAAKSKTTGKVEKRRAKKDPNAPKRGL) and 70-103 (KQRAPYEAKAAADKKRYEDEKQAYNAEADEEESS). A DNA-binding region (HMG box) is located at residues 26-94 (PKRGLSAYMF…RYEDEKQAYN (69 aa)). Residues 70–91 (KQRAPYEAKAAADKKRYEDEKQ) are compositionally biased toward basic and acidic residues.

The protein belongs to the NHP6 family. Weakly associates with the stable heterodimer of ctc-1/pob3 and ctc-2/spt16 to form the FACT complex.

It localises to the nucleus. The protein resides in the chromosome. Its function is as follows. DNA-binding protein that induces severe bending of DNA. Required for DNA-binding by the FACT complex, a general chromatin factor that acts to reorganize nucleosomes. The FACT complex is involved in multiple processes that require DNA as a template such as mRNA elongation, DNA replication and DNA repair. Also augments the fidelity of transcription by RNA polymerase III independently of any role in the FACT complex. This chain is Non-histone chromosomal protein 6 (nhp-1), found in Neurospora crassa (strain ATCC 24698 / 74-OR23-1A / CBS 708.71 / DSM 1257 / FGSC 987).